Reading from the N-terminus, the 89-residue chain is Large ribosomal subunit protein bL27 (89 aa).

A disordered region spans residues 1–26 (MAQKKAGGSSRNGRDSVGQRRGVKRF).

The protein belongs to the bacterial ribosomal protein bL27 family.

The polypeptide is Large ribosomal subunit protein bL27 (Desulfovibrio desulfuricans (strain ATCC 27774 / DSM 6949 / MB)).